The primary structure comprises 70 residues: MAFLKKSLFLVLFLALVPLSICEEEKREGENEKEQEDDNQSEEKRGLVSDLLSTVTGLLGNLGGGGLKKI.

An N-terminal signal peptide occupies residues 1 to 22 (MAFLKKSLFLVLFLALVPLSIC). The propeptide occupies 23 to 45 (EEEKREGENEKEQEDDNQSEEKR). The interval 25–45 (EKREGENEKEQEDDNQSEEKR) is disordered.

This sequence belongs to the frog skin active peptide (FSAP) family. Plasticin subfamily. In terms of tissue distribution, expressed by the skin glands.

The protein localises to the secreted. The native peptide is a cationic amphipathic alpha-helical antimicrobial peptide with potent activity against both Gram-positive and Gram-negative bacteria. It has weak activity against fungi and shows low hemolytic activity. This is Plasticin-S1 from Phyllomedusa sauvagei (Sauvage's leaf frog).